Reading from the N-terminus, the 282-residue chain is Bifunctional protein FolD (282 aa).

NADP(+)-binding positions include 164–166 and Ser189; that span reads GRS.

Belongs to the tetrahydrofolate dehydrogenase/cyclohydrolase family. Homodimer.

The catalysed reaction is (6R)-5,10-methylene-5,6,7,8-tetrahydrofolate + NADP(+) = (6R)-5,10-methenyltetrahydrofolate + NADPH. It catalyses the reaction (6R)-5,10-methenyltetrahydrofolate + H2O = (6R)-10-formyltetrahydrofolate + H(+). Its pathway is one-carbon metabolism; tetrahydrofolate interconversion. Its function is as follows. Catalyzes the oxidation of 5,10-methylenetetrahydrofolate to 5,10-methenyltetrahydrofolate and then the hydrolysis of 5,10-methenyltetrahydrofolate to 10-formyltetrahydrofolate. This Streptococcus suis (strain 98HAH33) protein is Bifunctional protein FolD.